Reading from the N-terminus, the 472-residue chain is Zinc finger and BTB domain-containing protein 18.2 (472 aa).

In terms of domain architecture, BTB spans Cys-24–Asn-91. The span at Lys-127–Phe-149 shows a compositional bias: basic and acidic residues. Disordered stretches follow at residues Lys-127–Lys-155, Ala-197–Met-236, and Asp-269–Ser-334. Over residues Ser-205–Ser-215 the composition is skewed to low complexity. Over residues Ala-279–Gly-288 the composition is skewed to polar residues. Over residues His-309–Arg-319 the composition is skewed to basic and acidic residues. C2H2-type zinc fingers lie at residues Cys-344–His-366, Pro-384–His-406, Phe-412–His-434, and His-440–His-463.

Belongs to the krueppel C2H2-type zinc-finger protein family. ZBTB18 subfamily.

It localises to the nucleus. Its function is as follows. Transcriptional repressor that plays a role in various developmental processes. Specifically binds the consensus DNA sequence 5'-[AC]ACATCTG[GT][AC]-3' which contains the E box core, and acts by recruiting chromatin remodeling multiprotein complexes. The polypeptide is Zinc finger and BTB domain-containing protein 18.2 (zbtb18.2) (Xenopus laevis (African clawed frog)).